Reading from the N-terminus, the 418-residue chain is Serine hydroxymethyltransferase (418 aa).

Residues Leu121 and 125–127 each bind (6S)-5,6,7,8-tetrahydrofolate; that span reads GHL. At Lys230 the chain carries N6-(pyridoxal phosphate)lysine. (6S)-5,6,7,8-tetrahydrofolate is bound by residues Glu246 and 355-357; that span reads SPF.

This sequence belongs to the SHMT family. In terms of assembly, homodimer. Requires pyridoxal 5'-phosphate as cofactor.

Its subcellular location is the cytoplasm. The catalysed reaction is (6R)-5,10-methylene-5,6,7,8-tetrahydrofolate + glycine + H2O = (6S)-5,6,7,8-tetrahydrofolate + L-serine. It functions in the pathway one-carbon metabolism; tetrahydrofolate interconversion. The protein operates within amino-acid biosynthesis; glycine biosynthesis; glycine from L-serine: step 1/1. Its function is as follows. Catalyzes the reversible interconversion of serine and glycine with tetrahydrofolate (THF) serving as the one-carbon carrier. This reaction serves as the major source of one-carbon groups required for the biosynthesis of purines, thymidylate, methionine, and other important biomolecules. Also exhibits THF-independent aldolase activity toward beta-hydroxyamino acids, producing glycine and aldehydes, via a retro-aldol mechanism. This Streptococcus pneumoniae serotype 19F (strain G54) protein is Serine hydroxymethyltransferase.